We begin with the raw amino-acid sequence, 461 residues long: Mycosin-3 (461 aa).

The signal sequence occupies residues Met-1–Ala-25. Residues Asp-64 to Leu-397 form the Peptidase S8 domain. Residues Asp-95, His-126, and Ser-342 each act as charge relay system in the active site. Residues Ala-432–Ile-452 traverse the membrane as a helical segment.

Belongs to the peptidase S8 family.

The protein localises to the cell membrane. The protein is Mycosin-3 of Mycobacterium tuberculosis (strain ATCC 25618 / H37Rv).